Reading from the N-terminus, the 456-residue chain is Serine/threonine-protein kinase meng-po (456 aa).

Residues 15 to 78 (RSFGDGGSTN…RSSIYKKPDK (64 aa)) are disordered. Low complexity predominate over residues 22-55 (STNSRNSNNNSSTCTNHNNQKRCSTPLTPTSTST). One can recognise a Protein kinase domain in the interval 101–367 (YNIEKTLAEG…VAKYMKDRWV (267 aa)). Residues 107-115 (LAEGCFAKI) and lysine 130 each bind ATP. Catalysis depends on aspartate 221, which acts as the Proton acceptor. Serine 334 bears the Phosphoserine; by PKA mark.

This sequence belongs to the protein kinase superfamily. Ser/Thr protein kinase family. Requires Mg(2+) as cofactor. In terms of tissue distribution, expressed in the mushroom bodies (at protein level).

It carries out the reaction L-seryl-[protein] + ATP = O-phospho-L-seryl-[protein] + ADP + H(+). The enzyme catalyses L-threonyl-[protein] + ATP = O-phospho-L-threonyl-[protein] + ADP + H(+). With respect to regulation, activated by Pka-C1-mediated phosphorylation of Ser-334. Functionally, serine/threonine-protein kinase involved in memory formation. Together with the cAMP-dependent protein kinase A Pka-C1, promotes long-term memory (LTM) by regulating CrebB stability and activity. Involved in the maintenance of anesthesia-sensitive memory (ASM) which includes short-term memory (STM) and middle-term memory (MTM). The sequence is that of Serine/threonine-protein kinase meng-po from Drosophila melanogaster (Fruit fly).